The sequence spans 347 residues: Phenylalanine--tRNA ligase alpha subunit (347 aa).

Residue E268 coordinates Mg(2+).

Belongs to the class-II aminoacyl-tRNA synthetase family. Phe-tRNA synthetase alpha subunit type 1 subfamily. Tetramer of two alpha and two beta subunits. Mg(2+) is required as a cofactor.

Its subcellular location is the cytoplasm. The catalysed reaction is tRNA(Phe) + L-phenylalanine + ATP = L-phenylalanyl-tRNA(Phe) + AMP + diphosphate + H(+). The chain is Phenylalanine--tRNA ligase alpha subunit from Leptothrix cholodnii (strain ATCC 51168 / LMG 8142 / SP-6) (Leptothrix discophora (strain SP-6)).